Consider the following 1113-residue polypeptide: uncharacterized protein (1113 aa).

313 to 320 (GPPGTGKS) contributes to the ATP binding site.

Belongs to the DNA2/NAM7 helicase family.

This is an uncharacterized protein from Mycoplasma genitalium (strain ATCC 33530 / DSM 19775 / NCTC 10195 / G37) (Mycoplasmoides genitalium).